The sequence spans 424 residues: Dihydrolipoyllysine-residue succinyltransferase component of 2-oxoglutarate dehydrogenase complex (424 aa).

The region spanning methionine 1–glycine 76 is the Lipoyl-binding domain. Lysine 42 carries the post-translational modification N6-lipoyllysine. 2 disordered regions span residues glycine 76–arginine 138 and valine 155–threonine 204. The span at glutamate 91–serine 105 shows a compositional bias: basic and acidic residues. Polar residues predominate over residues aspartate 122–proline 131. A Peripheral subunit-binding (PSBD) domain is found at asparagine 128–glutamine 164. Low complexity predominate over residues glutamine 162–alanine 176. Active-site residues include histidine 395 and aspartate 399.

Belongs to the 2-oxoacid dehydrogenase family. In terms of assembly, forms a 24-polypeptide structural core with octahedral symmetry. Part of the 2-oxoglutarate dehydrogenase (OGDH) complex composed of E1 (2-oxoglutarate dehydrogenase), E2 (dihydrolipoamide succinyltransferase) and E3 (dihydrolipoamide dehydrogenase); the complex contains multiple copies of the three enzymatic components (E1, E2 and E3). The cofactor is (R)-lipoate.

The catalysed reaction is N(6)-[(R)-dihydrolipoyl]-L-lysyl-[protein] + succinyl-CoA = N(6)-[(R)-S(8)-succinyldihydrolipoyl]-L-lysyl-[protein] + CoA. The protein operates within amino-acid degradation; L-lysine degradation via saccharopine pathway; glutaryl-CoA from L-lysine: step 6/6. Its function is as follows. E2 component of the 2-oxoglutarate dehydrogenase (OGDH) complex which catalyzes the second step in the conversion of 2-oxoglutarate to succinyl-CoA and CO(2). This is Dihydrolipoyllysine-residue succinyltransferase component of 2-oxoglutarate dehydrogenase complex (odhB) from Staphylococcus saprophyticus subsp. saprophyticus (strain ATCC 15305 / DSM 20229 / NCIMB 8711 / NCTC 7292 / S-41).